The chain runs to 204 residues: Sex-determining region Y protein (204 aa).

The sufficient for interaction with KPNB1 stretch occupies residues 59–136 (RVKRPMNAFI…YKYRPRRKAK (78 aa)). The HMG box DNA-binding region spans 60–128 (VKRPMNAFIV…MHREKYPNYK (69 aa)). Required for nuclear localization stretches follow at residues 61-77 (KRPMNAFIVWSRDQRRK) and 130-136 (RPRRKAK). A sufficient for interaction with EP300 region spans residues 107–139 (WPFFQEAQKLQAMHREKYPNYKYRPRRKAKMLP). Lysine 136 is subject to N6-acetyllysine. The interval 138–155 (LPKNCSLLPADPASVLCS) is necessary for interaction with ZNF208 isoform KRAB-O. The interval 175-204 (RMEHQLGHLPPINAASSPQQRDRYSHWTKL) is disordered. Positions 194 to 204 (QRDRYSHWTKL) are enriched in basic and acidic residues. Residues 198–204 (YSHWTKL) are necessary for interaction with SLC9A3R2.

It belongs to the SRY family. In terms of assembly, interacts with CALM, EP300, HDAC3, KPNB1, ZNF208 isoform KRAB-O, PARP1, SLC9A3R2 and WT1. The interaction with EP300 modulates its DNA-binding activity. The interaction with KPNB1 is sensitive to dissociation by Ran in the GTP-bound form. Interaction with PARP1 impaired its DNA-binding activity. Post-translationally, phosphorylated on serine residues by PKA. Phosphorylation by PKA enhances its DNA-binding activity and stimulates transcription repression. In terms of processing, acetylation of Lys-136 contributes to its nuclear localization and enhances its interaction with KPNB1. Deacetylated by HDAC3. Poly-ADP-ribosylated by PARP1. ADP-ribosylation reduces its DNA-binding activity.

It localises to the nucleus speckle. The protein localises to the cytoplasm. The protein resides in the nucleus. Its function is as follows. Transcriptional regulator that controls a genetic switch in male development. It is necessary and sufficient for initiating male sex determination by directing the development of supporting cell precursors (pre-Sertoli cells) as Sertoli rather than granulosa cells. Involved in different aspects of gene regulation including promoter activation or repression. Binds to the DNA consensus sequence 5'-[AT]AACAA[AT]-3'. SRY HMG box recognizes DNA by partial intercalation in the minor groove and promotes DNA bending. Also involved in pre-mRNA splicing. In male adult brain involved in the maintenance of motor functions of dopaminergic neurons. This chain is Sex-determining region Y protein, found in Homo sapiens (Human).